Consider the following 141-residue polypeptide: Nucleoside diphosphate kinase (141 aa).

6 residues coordinate ATP: lysine 11, phenylalanine 59, arginine 87, threonine 93, arginine 104, and asparagine 114. The active-site Pros-phosphohistidine intermediate is the histidine 117.

Belongs to the NDK family. In terms of assembly, homotetramer. It depends on Mg(2+) as a cofactor.

The protein resides in the cytoplasm. It carries out the reaction a 2'-deoxyribonucleoside 5'-diphosphate + ATP = a 2'-deoxyribonucleoside 5'-triphosphate + ADP. The enzyme catalyses a ribonucleoside 5'-diphosphate + ATP = a ribonucleoside 5'-triphosphate + ADP. In terms of biological role, major role in the synthesis of nucleoside triphosphates other than ATP. The ATP gamma phosphate is transferred to the NDP beta phosphate via a ping-pong mechanism, using a phosphorylated active-site intermediate. The sequence is that of Nucleoside diphosphate kinase from Polynucleobacter necessarius subsp. necessarius (strain STIR1).